The chain runs to 483 residues: Regulatory protein ViaA (483 aa).

It belongs to the ViaA family. In terms of assembly, homodimer. Interacts with RavA.

The protein localises to the cytoplasm. In terms of biological role, component of the RavA-ViaA chaperone complex, which may act on the membrane to optimize the function of some of the respiratory chains. ViaA stimulates the ATPase activity of RavA. The chain is Regulatory protein ViaA from Salmonella agona (strain SL483).